The sequence spans 657 residues: Kinesin-like protein KIF22 (657 aa).

The interval 1 to 33 (MNVRAKKKPQQREMASASSGPSRSLSKGGVSRR) is disordered. Residues 16–33 (SASSGPSRSLSKGGVSRR) show a composition bias toward low complexity. The Kinesin motor domain occupies 38–360 (RVRVAVRLRP…LNFTARSKEV (323 aa)). Residue 119–126 (GPTGAGKT) coordinates ATP. The interval 388 to 415 (PSEAKKAKGPEEESTGSPESTAAPASAS) is disordered. Positions 402 to 415 (TGSPESTAAPASAS) are enriched in low complexity. Residues Ser404, Ser419, and Ser444 each carry the phosphoserine modification. A Glycyl lysine isopeptide (Lys-Gly) (interchain with G-Cter in SUMO2) cross-link involves residue Lys457. Residues 457-502 (KRERMVLIKTVEEKNLEIERLKMKQKELEAKVLAQEALDPKEKENT) adopt a coiled-coil conformation. Ser537, Ser554, and Ser573 each carry phosphoserine.

Belongs to the TRAFAC class myosin-kinesin ATPase superfamily. Kinesin family. In terms of assembly, interacts with FAM83D and SIAH1. In terms of processing, ubiquitinated; mediated by SIAH1 and leading to its subsequent proteasomal degradation.

It localises to the nucleus. The protein localises to the cytoplasm. Its subcellular location is the cytoskeleton. In terms of biological role, kinesin family member that is involved in spindle formation and the movements of chromosomes during mitosis and meiosis. Binds to microtubules and to DNA. Plays a role in congression of laterally attached chromosomes in NDC80-depleted cells. The protein is Kinesin-like protein KIF22 (Kif22) of Rattus norvegicus (Rat).